The primary structure comprises 422 residues: Phospho-N-acetylmuramoyl-pentapeptide-transferase (422 aa).

9 helical membrane-spanning segments follow: residues 28–48, 71–91, 95–115, 136–156, 211–231, 239–259, 279–299, 313–333, and 399–419; these read LMAV…FINL, VGVP…PCLL, LDNI…SLGF, IIGQ…SPDV, AGWF…SNGA, GMAA…AYVS, LVIY…YNAY, IGGI…IPIL, and KITV…IITL.

It belongs to the glycosyltransferase 4 family. MraY subfamily. Requires Mg(2+) as cofactor.

It is found in the cell inner membrane. The enzyme catalyses UDP-N-acetyl-alpha-D-muramoyl-L-alanyl-gamma-D-glutamyl-meso-2,6-diaminopimeloyl-D-alanyl-D-alanine + di-trans,octa-cis-undecaprenyl phosphate = di-trans,octa-cis-undecaprenyl diphospho-N-acetyl-alpha-D-muramoyl-L-alanyl-D-glutamyl-meso-2,6-diaminopimeloyl-D-alanyl-D-alanine + UMP. It participates in cell wall biogenesis; peptidoglycan biosynthesis. Catalyzes the initial step of the lipid cycle reactions in the biosynthesis of the cell wall peptidoglycan: transfers peptidoglycan precursor phospho-MurNAc-pentapeptide from UDP-MurNAc-pentapeptide onto the lipid carrier undecaprenyl phosphate, yielding undecaprenyl-pyrophosphoryl-MurNAc-pentapeptide, known as lipid I. The sequence is that of Phospho-N-acetylmuramoyl-pentapeptide-transferase from Bacteroides thetaiotaomicron (strain ATCC 29148 / DSM 2079 / JCM 5827 / CCUG 10774 / NCTC 10582 / VPI-5482 / E50).